A 560-amino-acid chain; its full sequence is Oxygen-dependent choline dehydrogenase (560 aa).

Residue 8–37 participates in FAD binding; the sequence is DYIIIGAGSAGNVLATRLTEDADVSVLLLE. His-475 functions as the Proton acceptor in the catalytic mechanism.

This sequence belongs to the GMC oxidoreductase family. Requires FAD as cofactor.

The enzyme catalyses choline + A = betaine aldehyde + AH2. It catalyses the reaction betaine aldehyde + NAD(+) + H2O = glycine betaine + NADH + 2 H(+). Its pathway is amine and polyamine biosynthesis; betaine biosynthesis via choline pathway; betaine aldehyde from choline (cytochrome c reductase route): step 1/1. Functionally, involved in the biosynthesis of the osmoprotectant glycine betaine. Catalyzes the oxidation of choline to betaine aldehyde and betaine aldehyde to glycine betaine at the same rate. This Stenotrophomonas maltophilia (strain R551-3) protein is Oxygen-dependent choline dehydrogenase.